The following is a 123-amino-acid chain: 13 kDa major membrane protein (123 aa).

The protein resides in the cell membrane. In Francisella tularensis subsp. holarctica (strain LVS), this protein is 13 kDa major membrane protein.